The sequence spans 355 residues: Magnesium-chelatase subunit ChlI (355 aa).

47 to 54 (GDRGTGKS) serves as a coordination point for ATP.

It belongs to the Mg-chelatase subunits D/I family.

The protein resides in the plastid. The protein localises to the chloroplast. The catalysed reaction is protoporphyrin IX + Mg(2+) + ATP + H2O = Mg-protoporphyrin IX + ADP + phosphate + 3 H(+). It participates in porphyrin-containing compound metabolism; chlorophyll biosynthesis. In terms of biological role, involved in chlorophyll biosynthesis; introduces a magnesium ion into protoporphyrin IX to yield Mg-protoporphyrin IX. The chain is Magnesium-chelatase subunit ChlI (chlI) from Pyropia yezoensis (Susabi-nori).